We begin with the raw amino-acid sequence, 406 residues long: Probable delta-aminolevulinic acid dehydratase 2, chloroplastic (406 aa).

The transit peptide at 1 to 34 (MTSSMFRSPCKIPSVKGFEQKSYVGLKAASYNVR) directs the protein to the chloroplast. Lys275 (schiff-base intermediate with substrate) is an active-site residue. 2 residues coordinate 5-aminolevulinate: Arg285 and Lys291. Glu307 provides a ligand contact to Mg(2+). Lys322 (schiff-base intermediate with substrate) is an active-site residue. Ser348 and Tyr387 together coordinate 5-aminolevulinate.

Belongs to the ALAD family. In terms of assembly, homooctamer. It depends on Mg(2+) as a cofactor.

Its subcellular location is the plastid. It is found in the chloroplast. It catalyses the reaction 2 5-aminolevulinate = porphobilinogen + 2 H2O + H(+). The protein operates within porphyrin-containing compound metabolism; protoporphyrin-IX biosynthesis; coproporphyrinogen-III from 5-aminolevulinate: step 1/4. It functions in the pathway porphyrin-containing compound metabolism; chlorophyll biosynthesis. In terms of biological role, catalyzes an early step in the biosynthesis of tetrapyrroles. Binds two molecules of 5-aminolevulinate per subunit, each at a distinct site, and catalyzes their condensation to form porphobilinogen. The protein is Probable delta-aminolevulinic acid dehydratase 2, chloroplastic (HEMB2) of Arabidopsis thaliana (Mouse-ear cress).